Here is a 704-residue protein sequence, read N- to C-terminus: MTRQVALDKVRNIGIMAHIDAGKTTTTERILYYTGRLHRMGEVHDGGATMDWMEQEKERGITITSAATTCFWSPKYGNYKGENHRINIIDTPGHVDFTVEVERSLRVLDGAVALFCAVGGVEPQSETVWRQANKYGVPRIAYINKMDRTGADFFDTIKAIRERLNSNPVPLQIPIGEGEIYAGFVDLIRMKGIIFDKEDGSTYEEVEIPHDLENEARTWRINMLEAVSEVDETLLEKYLNGEDITESEVRKVLRQATLNVDIIPVLCGSSFKNKGVQFMLDAVVDYLASPLDDGEVEGHHPRTEEDVVRHPSDDEPFAALAFKIATDPFVGKLTFFRVYSGMLKAGSYVLNSITGKKERVGRVLQMHSNKREDLDAVYAGDIAAAVGLKEVRTGDTLCDEASPVVLEKMVFPEPVIQIAIEPKTKVDSDKLGVSLAKLAEEDPTFRVKTDDETGQTLIAGMGELHLEILVDRLRREFKVEANVGQPQVAYRETIRSKVDFEGKFVRQSGGKGQFGLVNITVEPLEEGKGYEFVDAVKGGVIPREYIPAVNAGIQEAMKDGVVAGYPMQDIKVTLFDGKYHDVDSSEMAFKIAGSIGFKGGARKANPVLLEPIMKVEVVTPEEYLGDVMGDLSGRRGHIEGMGQRAGAQFVGAKVPLSAMFGYSTDLRSMTQGRANYSMEFESYREVPKNIAETLQEKRSSKDAQ.

The tr-type G domain occupies 8–291 (DKVRNIGIMA…AVVDYLASPL (284 aa)). GTP contacts are provided by residues 17 to 24 (AHIDAGKT), 90 to 94 (DTPGH), and 144 to 147 (NKMD).

Belongs to the TRAFAC class translation factor GTPase superfamily. Classic translation factor GTPase family. EF-G/EF-2 subfamily.

It localises to the cytoplasm. Functionally, catalyzes the GTP-dependent ribosomal translocation step during translation elongation. During this step, the ribosome changes from the pre-translocational (PRE) to the post-translocational (POST) state as the newly formed A-site-bound peptidyl-tRNA and P-site-bound deacylated tRNA move to the P and E sites, respectively. Catalyzes the coordinated movement of the two tRNA molecules, the mRNA and conformational changes in the ribosome. This chain is Elongation factor G, found in Chlorobium phaeovibrioides (strain DSM 265 / 1930) (Prosthecochloris vibrioformis (strain DSM 265)).